We begin with the raw amino-acid sequence, 155 residues long: Small ribosomal subunit protein uS7cz/uS7cy (155 aa).

Belongs to the universal ribosomal protein uS7 family. As to quaternary structure, part of the 30S ribosomal subunit.

The protein resides in the plastid. Its function is as follows. One of the primary rRNA binding proteins, it binds directly to 16S rRNA where it nucleates assembly of the head domain of the 30S subunit. The protein is Small ribosomal subunit protein uS7cz/uS7cy (rps7-A) of Cuscuta obtusiflora (Peruvian dodder).